Reading from the N-terminus, the 66-residue chain is Large ribosomal subunit protein bL33c (66 aa).

Belongs to the bacterial ribosomal protein bL33 family.

It is found in the plastid. Its subcellular location is the chloroplast. This Acorus calamus (Sweet flag) protein is Large ribosomal subunit protein bL33c.